The chain runs to 164 residues: UPF0304 protein YfbU (164 aa).

The protein belongs to the UPF0304 family.

The chain is UPF0304 protein YfbU from Shigella flexneri serotype 5b (strain 8401).